Consider the following 615-residue polypeptide: MSTSIFETPLPRSDLFLCSNSLLSQNYKLFDNSRSFGLKSLRPRCQKDGLLYPKPLNFGFCRVSRRKRKPNFVLNSVLSVDKELESDETVGLGRSREYDAIVIGSGIGGLVAATQLAVKGAKVLVLEKYLIPGGSSGYYERDGFTFDVGSSVMFGFSDKGNLNLITQALAAVGCKMEVIPDPSTVHFHLPSNLSVLVHREYNEFFSELTSKFPHEKEGIFKFYGECWKIFNALNSLELKSLEEPIYLFGQFFKKPMECLTLAYYLPQNAGDIARKFIKDPEVLSFIDAECFIVSTVNALKTPMINASMVLCDRHYGGINYPVGGVGGIAKSLAKGLVDQGSEIQYKANVKSIIVENGKAVGVRLANGNEIFAKNIISNATRWDTFGKLLKQDELPKEEENFQKLYIKAPSFLSIHLGVKSDVLPPDTDCHHFVLEDDWSNLEVPYGSIFLSIPTVLDSSLAPEGNHILHIFTTSSIEDWQGMSQKDYEKKKELVADEIISRLEKKLFPGLQSSIVLKEVGTPKTHRRYLARDSGTYGPMPQGTPKGLLGMPFNTTAIDGLYCVGDSCFPGQGVIAVAFSGVMCAHRVAADLGLEQKSPILDAALLRLLGWFRTLA.

The N-terminal 62 residues, 1–62 (MSTSIFETPL…PKPLNFGFCR (62 aa)), are a transit peptide targeting the chloroplast.

This sequence belongs to the carotenoid/retinoid oxidoreductase family. CrtISO subfamily. It depends on NAD(+) as a cofactor. The cofactor is NADP(+). Requires FAD as cofactor.

It localises to the plastid. It is found in the chloroplast membrane. The enzyme catalyses 7,7',9,9'-tetra-cis-lycopene = all-trans-lycopene. It participates in carotenoid biosynthesis; lycopene biosynthesis. Its function is as follows. Carotene cis-trans-isomerase that converts 7,9,9'-tri-cis-neurosporene to 9'-cis-neurosporene and 7,9,9',7'-tetra-cis-lycopene (also known as prolycopene) into all-trans-lycopene. Isomerization requires redox-active components, suggesting that isomerization is achieved by a reversible redox reaction acting at specific double bonds. Isomerizes adjacent cis-double bonds at C7 and C9 pairwise into the trans-configuration, but is incapable of isomerizing single cis-double bonds at C9 and C9'. This Daucus carota (Wild carrot) protein is Prolycopene isomerase, chloroplastic (CRTISO).